The chain runs to 200 residues: NADH-quinone oxidoreductase subunit B (200 aa).

[4Fe-4S] cluster is bound by residues Cys78, Cys79, Cys144, and Cys174.

It belongs to the complex I 20 kDa subunit family. As to quaternary structure, NDH-1 is composed of 14 different subunits. Subunits NuoB, C, D, E, F, and G constitute the peripheral sector of the complex. It depends on [4Fe-4S] cluster as a cofactor.

The protein localises to the cell membrane. The catalysed reaction is a quinone + NADH + 5 H(+)(in) = a quinol + NAD(+) + 4 H(+)(out). Functionally, NDH-1 shuttles electrons from NADH, via FMN and iron-sulfur (Fe-S) centers, to quinones in the respiratory chain. The immediate electron acceptor for the enzyme in this species is believed to be ubiquinone. Couples the redox reaction to proton translocation (for every two electrons transferred, four hydrogen ions are translocated across the cytoplasmic membrane), and thus conserves the redox energy in a proton gradient. The chain is NADH-quinone oxidoreductase subunit B from Dehalococcoides mccartyi (strain ATCC BAA-2100 / JCM 16839 / KCTC 5957 / BAV1).